The sequence spans 181 residues: ATP-dependent protease subunit ClpQ (181 aa).

Residue Ser-2 is part of the active site. Na(+)-binding residues include Gly-165, Cys-168, and Thr-171.

In terms of assembly, a double ring-shaped homohexamer of ClpQ is capped on each side by a ring-shaped ClpY homohexamer. The assembly of the ClpQ/ClpY complex is dependent on binding of ATP.

It localises to the cytoplasm. In terms of biological role, protease subunit of a proteasome-like degradation complex. In Bacillus subtilis (strain 168), this protein is ATP-dependent protease subunit ClpQ (clpQ).